The chain runs to 500 residues: Protein nucleotidyltransferase YdiU (500 aa).

ATP contacts are provided by Gly-96, Gly-98, Arg-99, Lys-119, Asp-131, Gly-132, Arg-182, and Arg-189. Asp-258 (proton acceptor) is an active-site residue. Positions 259 and 268 each coordinate Mg(2+). Asp-268 serves as a coordination point for ATP.

Belongs to the SELO family. It depends on Mg(2+) as a cofactor. Mn(2+) is required as a cofactor.

It carries out the reaction L-seryl-[protein] + ATP = 3-O-(5'-adenylyl)-L-seryl-[protein] + diphosphate. It catalyses the reaction L-threonyl-[protein] + ATP = 3-O-(5'-adenylyl)-L-threonyl-[protein] + diphosphate. The enzyme catalyses L-tyrosyl-[protein] + ATP = O-(5'-adenylyl)-L-tyrosyl-[protein] + diphosphate. The catalysed reaction is L-histidyl-[protein] + UTP = N(tele)-(5'-uridylyl)-L-histidyl-[protein] + diphosphate. It carries out the reaction L-seryl-[protein] + UTP = O-(5'-uridylyl)-L-seryl-[protein] + diphosphate. It catalyses the reaction L-tyrosyl-[protein] + UTP = O-(5'-uridylyl)-L-tyrosyl-[protein] + diphosphate. Nucleotidyltransferase involved in the post-translational modification of proteins. It can catalyze the addition of adenosine monophosphate (AMP) or uridine monophosphate (UMP) to a protein, resulting in modifications known as AMPylation and UMPylation. In Rhizobium johnstonii (strain DSM 114642 / LMG 32736 / 3841) (Rhizobium leguminosarum bv. viciae), this protein is Protein nucleotidyltransferase YdiU.